A 326-amino-acid chain; its full sequence is Tetraacyldisaccharide 4'-kinase (326 aa).

S53–T60 contributes to the ATP binding site.

This sequence belongs to the LpxK family.

It catalyses the reaction a lipid A disaccharide + ATP = a lipid IVA + ADP + H(+). It functions in the pathway glycolipid biosynthesis; lipid IV(A) biosynthesis; lipid IV(A) from (3R)-3-hydroxytetradecanoyl-[acyl-carrier-protein] and UDP-N-acetyl-alpha-D-glucosamine: step 6/6. Its function is as follows. Transfers the gamma-phosphate of ATP to the 4'-position of a tetraacyldisaccharide 1-phosphate intermediate (termed DS-1-P) to form tetraacyldisaccharide 1,4'-bis-phosphate (lipid IVA). The sequence is that of Tetraacyldisaccharide 4'-kinase from Actinobacillus pleuropneumoniae serotype 7 (strain AP76).